Here is a 411-residue protein sequence, read N- to C-terminus: Glucose-1-phosphate adenylyltransferase (411 aa).

Residues glycine 162, 177 to 178 (EK), and serine 195 contribute to the alpha-D-glucose 1-phosphate site.

The protein belongs to the bacterial/plant glucose-1-phosphate adenylyltransferase family. In terms of assembly, homotetramer.

The enzyme catalyses alpha-D-glucose 1-phosphate + ATP + H(+) = ADP-alpha-D-glucose + diphosphate. It participates in glycan biosynthesis; glycogen biosynthesis. Involved in the biosynthesis of ADP-glucose, a building block required for the elongation reactions to produce glycogen. Catalyzes the reaction between ATP and alpha-D-glucose 1-phosphate (G1P) to produce pyrophosphate and ADP-Glc. This Thermodesulfovibrio yellowstonii (strain ATCC 51303 / DSM 11347 / YP87) protein is Glucose-1-phosphate adenylyltransferase.